We begin with the raw amino-acid sequence, 89 residues long: HssA/B-like protein 22 (89 aa).

It belongs to the hssA/B family.

This is HssA/B-like protein 22 (hssl22) from Dictyostelium discoideum (Social amoeba).